Here is a 340-residue protein sequence, read N- to C-terminus: UDP-3-O-acylglucosamine N-acyltransferase (340 aa).

The Proton acceptor role is filled by H237.

The protein belongs to the transferase hexapeptide repeat family. LpxD subfamily. In terms of assembly, homotrimer.

It carries out the reaction a UDP-3-O-[(3R)-3-hydroxyacyl]-alpha-D-glucosamine + a (3R)-hydroxyacyl-[ACP] = a UDP-2-N,3-O-bis[(3R)-3-hydroxyacyl]-alpha-D-glucosamine + holo-[ACP] + H(+). The protein operates within bacterial outer membrane biogenesis; LPS lipid A biosynthesis. Catalyzes the N-acylation of UDP-3-O-acylglucosamine using 3-hydroxyacyl-ACP as the acyl donor. Is involved in the biosynthesis of lipid A, a phosphorylated glycolipid that anchors the lipopolysaccharide to the outer membrane of the cell. This is UDP-3-O-acylglucosamine N-acyltransferase from Desulfosudis oleivorans (strain DSM 6200 / JCM 39069 / Hxd3) (Desulfococcus oleovorans).